The chain runs to 72 residues: Translation initiation factor IF-1 (72 aa).

An S1-like domain is found at 1 to 72 (MSKDDVIEMQ…TRGRITWRAK (72 aa)).

Belongs to the IF-1 family. Component of the 30S ribosomal translation pre-initiation complex which assembles on the 30S ribosome in the order IF-2 and IF-3, IF-1 and N-formylmethionyl-tRNA(fMet); mRNA recruitment can occur at any time during PIC assembly.

Its subcellular location is the cytoplasm. In terms of biological role, one of the essential components for the initiation of protein synthesis. Stabilizes the binding of IF-2 and IF-3 on the 30S subunit to which N-formylmethionyl-tRNA(fMet) subsequently binds. Helps modulate mRNA selection, yielding the 30S pre-initiation complex (PIC). Upon addition of the 50S ribosomal subunit IF-1, IF-2 and IF-3 are released leaving the mature 70S translation initiation complex. This chain is Translation initiation factor IF-1, found in Clostridium botulinum (strain ATCC 19397 / Type A).